The sequence spans 179 residues: Large ribosomal subunit protein uL5 (179 aa).

The protein belongs to the universal ribosomal protein uL5 family. As to quaternary structure, part of the 50S ribosomal subunit; part of the 5S rRNA/L5/L18/L25 subcomplex. Contacts the 5S rRNA and the P site tRNA. Forms a bridge to the 30S subunit in the 70S ribosome.

In terms of biological role, this is one of the proteins that bind and probably mediate the attachment of the 5S RNA into the large ribosomal subunit, where it forms part of the central protuberance. In the 70S ribosome it contacts protein S13 of the 30S subunit (bridge B1b), connecting the 2 subunits; this bridge is implicated in subunit movement. Contacts the P site tRNA; the 5S rRNA and some of its associated proteins might help stabilize positioning of ribosome-bound tRNAs. The sequence is that of Large ribosomal subunit protein uL5 from Nitrosospira multiformis (strain ATCC 25196 / NCIMB 11849 / C 71).